Reading from the N-terminus, the 134-residue chain is Protein NrdI (134 aa).

Belongs to the NrdI family.

Functionally, probably involved in ribonucleotide reductase function. The chain is Protein NrdI from Rhizobium leguminosarum bv. trifolii (strain WSM2304).